Reading from the N-terminus, the 150-residue chain is MERTFLMIKPDGVQRKLVGEIITRLEKKGLKLVGGKFMTVSKEKAETHYGEHADKPFYEGLVSFITSAPVFAMVVEGENVVEVTRNMIGKTNPTEAAPGTIRGDLGLTVGRNVIHGSDSVESAKREISLWFEPNELSVYTANDEEWLYEN.

ATP-binding residues include Lys-9, Phe-57, Arg-85, Thr-91, Arg-102, and Asn-112. His-115 acts as the Pros-phosphohistidine intermediate in catalysis.

Belongs to the NDK family. Homotetramer. Mg(2+) serves as cofactor.

Its subcellular location is the cytoplasm. It catalyses the reaction a 2'-deoxyribonucleoside 5'-diphosphate + ATP = a 2'-deoxyribonucleoside 5'-triphosphate + ADP. The catalysed reaction is a ribonucleoside 5'-diphosphate + ATP = a ribonucleoside 5'-triphosphate + ADP. Its function is as follows. Major role in the synthesis of nucleoside triphosphates other than ATP. The ATP gamma phosphate is transferred to the NDP beta phosphate via a ping-pong mechanism, using a phosphorylated active-site intermediate. The protein is Nucleoside diphosphate kinase of Staphylococcus carnosus (strain TM300).